The primary structure comprises 160 residues: Cytochrome b6-f complex subunit 4 (160 aa).

3 helical membrane passes run 36–56, 95–115, and 131–151; these read LLYM…GLAV, LLGV…PFIE, and TIFL…TLPI.

It belongs to the cytochrome b family. PetD subfamily. In terms of assembly, the 4 large subunits of the cytochrome b6-f complex are cytochrome b6, subunit IV (17 kDa polypeptide, petD), cytochrome f and the Rieske protein, while the 4 small subunits are petG, petL, petM and petN. The complex functions as a dimer.

The protein localises to the plastid. It is found in the chloroplast thylakoid membrane. Its function is as follows. Component of the cytochrome b6-f complex, which mediates electron transfer between photosystem II (PSII) and photosystem I (PSI), cyclic electron flow around PSI, and state transitions. The protein is Cytochrome b6-f complex subunit 4 of Staurastrum punctulatum (Green alga).